We begin with the raw amino-acid sequence, 366 residues long: Latent membrane protein 1 (366 aa).

The Cytoplasmic portion of the chain corresponds to 1-23 (MERDLERGPPGPPRPPLGPPLSS). A helical transmembrane segment spans residues 24 to 44 (SIGLALLLLLLALLFWLYIVL). Topologically, residues 45–51 (SNWTGGA) are extracellular. Residues 52 to 72 (LLVLYSFALMLIIIILIIFIF) traverse the membrane as a helical segment. The Cytoplasmic segment spans residues 73–75 (RRD). The chain crosses the membrane as a helical span at residues 76-96 (LLCPLGGLGLLLLMVTLLLIA). Topologically, residues 97–106 (LWNLHGQALY) are extracellular. A helical membrane pass occupies residues 107–127 (LGIVLFIFGCLLVLGLWIYFL). At 128 to 139 (EILWRLGATIWQ) the chain is on the cytoplasmic side. A helical membrane pass occupies residues 140 to 160 (LLAFILAFFLAIILLIIALYL). The Extracellular segment spans residues 161-163 (QQN). The helical transmembrane segment at 164–184 (WWTLLVDLLWLLLFMAILIWM) threads the bilayer. The Cytoplasmic portion of the chain corresponds to 185-366 (YFHGPRHTDE…HGPVQLSYYD (182 aa)). Positions 194–232 (EHHHDDSLPHPQQATDDSSHESDSNSNEGRHHLLVSGAG) are CTAR1. Positions 194-366 (EHHHDDSLPH…HGPVQLSYYD (173 aa)) are disordered. The Interaction with host TRAF proteins motif lies at 204 to 208 (PQQAT). Positions 210-224 (DSSHESDSNSNEGRH) are enriched in basic and acidic residues. Low complexity-rich tracts occupy residues 251–267 (NGPQ…PQDP) and 337–346 (PHLPTLLLGT). Residues 332–366 (GGGGDPHLPTLLLGTSGSGGDDDDPHGPVQLSYYD) form a CTAR2 region.

This sequence belongs to the herpesviridae LMP-1 family. As to quaternary structure, interacts (via PXQXT motif) with host tumor necrosis factor receptor-associated factor (TRAF) proteins TRAF1, TRAF2, TRAF3 and TRAF5. Interacts with human protein ZMYND11; leading to negatively regulate NF-kappa-B activation. Interacts with host UBE2I; this interaction induces the sumoylation of various cellular proteins. Interacts with host IRF7. Post-translationally, ubiquitinated on the N-terminus.

It localises to the host cell membrane. Its function is as follows. Acts as a CD40 functional homolog to prevent apoptosis of infected B-lymphocytes and drive their proliferation. Functions as a constitutively active tumor necrosis factor receptor that induces the activation of several signaling pathways, including those of the NF-kappa-B family. LMP1 signaling leads to up-regulation of antiapoptotic proteins and provide growth signals in latently infected cells. Interacts with host UBE2I and subsequently affects the sumoylation state of several cellular proteins. For example, induces the sumoylation of host IRF7 thereby limiting its transcriptional activity and modulating the activation of innate immune responses. Also inhibits host IFN-alpha-stimulated STAT2 nuclear translocation and interferon-stimulated response element transcriptional activity by interacting with and inhibiting host TYK2. Induces SUMO expression during viral latency thereby dysregulating the host sumoylation processes. This is Latent membrane protein 1 (LMP1) from Homo sapiens (Human).